The sequence spans 357 residues: UDP-N-acetylglucosamine--N-acetylmuramyl-(pentapeptide) pyrophosphoryl-undecaprenol N-acetylglucosamine transferase (357 aa).

Residues 13 to 15 (SAG), Arg-166, Ser-196, and Gln-291 each bind UDP-N-acetyl-alpha-D-glucosamine.

This sequence belongs to the glycosyltransferase 28 family. MurG subfamily.

The protein resides in the cell membrane. It catalyses the reaction di-trans,octa-cis-undecaprenyl diphospho-N-acetyl-alpha-D-muramoyl-L-alanyl-D-glutamyl-meso-2,6-diaminopimeloyl-D-alanyl-D-alanine + UDP-N-acetyl-alpha-D-glucosamine = di-trans,octa-cis-undecaprenyl diphospho-[N-acetyl-alpha-D-glucosaminyl-(1-&gt;4)]-N-acetyl-alpha-D-muramoyl-L-alanyl-D-glutamyl-meso-2,6-diaminopimeloyl-D-alanyl-D-alanine + UDP + H(+). It functions in the pathway cell wall biogenesis; peptidoglycan biosynthesis. Its function is as follows. Cell wall formation. Catalyzes the transfer of a GlcNAc subunit on undecaprenyl-pyrophosphoryl-MurNAc-pentapeptide (lipid intermediate I) to form undecaprenyl-pyrophosphoryl-MurNAc-(pentapeptide)GlcNAc (lipid intermediate II). In Clostridium perfringens (strain SM101 / Type A), this protein is UDP-N-acetylglucosamine--N-acetylmuramyl-(pentapeptide) pyrophosphoryl-undecaprenol N-acetylglucosamine transferase.